The primary structure comprises 445 residues: Sporulation protein YkvU (445 aa).

A run of 12 helical transmembrane segments spans residues 7–29 (GIIL…NMIL), 39–61 (GLYM…ELPI), 82–104 (AFRM…LPFI), 109–131 (TYHP…TSIA), 144–166 (IAIA…FQWY), 172–194 (MAVL…YLYS), 237–259 (VNAI…GTAA), 269–291 (VAVT…MIPS), 312–334 (IFIT…GPLT), 349–371 (LLWP…IGMG), 376–395 (AFYH…YVLG), and 400–422 (LQML…LHYA).

It is found in the forespore membrane. The protein is Sporulation protein YkvU (ykvU) of Bacillus subtilis (strain 168).